A 115-amino-acid polypeptide reads, in one-letter code: Probable non-functional T cell receptor beta variable 7-1 (115 aa).

Residues 1–21 (MGTRLLCWAAICLLGADHTGA) form the signal peptide. Positions 22–115 (GVSQSLRHKV…LAVYLCASSS (94 aa)) constitute an Ig-like domain.

Most probably, the alpha-beta TR is not assembled due to incorrect folding of the beta chain. Alpha-beta TR is a heterodimer composed of an alpha and beta chain; disulfide-linked. The alpha-beta TR is associated with the transmembrane signaling CD3 coreceptor proteins to form the TR-CD3 (TcR or TCR). The assembly of alpha-beta TR heterodimers with CD3 occurs in the endoplasmic reticulum where a single alpha-beta TR heterodimer associates with one CD3D-CD3E heterodimer, one CD3G-CD3E heterodimer and one CD247 homodimer forming a stable octameric structure. CD3D-CD3E and CD3G-CD3E heterodimers preferentially associate with TR alpha and TR beta chains, respectively. The association of the CD247 homodimer is the last step of TcR assembly in the endoplasmic reticulum and is required for transport to the cell surface.

It is found in the cell membrane. In terms of biological role, probable non-functional open reading frame (ORF) of V region of the variable domain of T cell receptor (TR) beta chain. Non-functional ORF generally cannot participate in the synthesis of a productive T cell receptor (TR) chain due to altered V-(D)-J or switch recombination and/or splicing site (at mRNA level) and/or conserved amino acid change (protein level). Alpha-beta T cell receptors are antigen specific receptors which are essential to the immune response and are present on the cell surface of T lymphocytes. Recognize peptide-major histocompatibility (MH) (pMH) complexes that are displayed by antigen presenting cells (APC), a prerequisite for efficient T cell adaptive immunity against pathogens. Binding of alpha-beta TR to pMH complex initiates TR-CD3 clustering on the cell surface and intracellular activation of LCK that phosphorylates the ITAM motifs of CD3G, CD3D, CD3E and CD247 enabling the recruitment of ZAP70. In turn ZAP70 phosphorylates LAT, which recruits numerous signaling molecules to form the LAT signalosome. The LAT signalosome propagates signal branching to three major signaling pathways, the calcium, the mitogen-activated protein kinase (MAPK) kinase and the nuclear factor NF-kappa-B (NF-kB) pathways, leading to the mobilization of transcription factors that are critical for gene expression and essential for T cell growth and differentiation. The T cell repertoire is generated in the thymus, by V-(D)-J rearrangement. This repertoire is then shaped by intrathymic selection events to generate a peripheral T cell pool of self-MH restricted, non-autoaggressive T cells. Post-thymic interaction of alpha-beta TR with the pMH complexes shapes TR structural and functional avidity. The polypeptide is Probable non-functional T cell receptor beta variable 7-1 (Homo sapiens (Human)).